Here is a 485-residue protein sequence, read N- to C-terminus: Glutamyl-tRNA(Gln) amidotransferase subunit A (485 aa).

Catalysis depends on charge relay system residues K79 and S154. The active-site Acyl-ester intermediate is S178.

It belongs to the amidase family. GatA subfamily. As to quaternary structure, heterotrimer of A, B and C subunits.

The enzyme catalyses L-glutamyl-tRNA(Gln) + L-glutamine + ATP + H2O = L-glutaminyl-tRNA(Gln) + L-glutamate + ADP + phosphate + H(+). Allows the formation of correctly charged Gln-tRNA(Gln) through the transamidation of misacylated Glu-tRNA(Gln) in organisms which lack glutaminyl-tRNA synthetase. The reaction takes place in the presence of glutamine and ATP through an activated gamma-phospho-Glu-tRNA(Gln). This Geobacillus kaustophilus (strain HTA426) protein is Glutamyl-tRNA(Gln) amidotransferase subunit A.